The primary structure comprises 225 residues: Ribonuclease 3 (225 aa).

The RNase III domain maps to 7 to 129; it reads MPRLCRTLGY…IIGAVYIDSG (123 aa). Residue Glu42 participates in Mg(2+) binding. The active site involves Asp46. Mg(2+) is bound by residues Asp115 and Glu118. Glu118 is an active-site residue. Positions 155–225 constitute a DRBM domain; the sequence is DPKTLLQELL…AADALELMKR (71 aa).

It belongs to the ribonuclease III family. As to quaternary structure, homodimer. Requires Mg(2+) as cofactor.

Its subcellular location is the cytoplasm. The catalysed reaction is Endonucleolytic cleavage to 5'-phosphomonoester.. Its function is as follows. Digests double-stranded RNA. Involved in the processing of primary rRNA transcript to yield the immediate precursors to the large and small rRNAs (23S and 16S). Processes some mRNAs, and tRNAs when they are encoded in the rRNA operon. Processes pre-crRNA and tracrRNA of type II CRISPR loci if present in the organism. The polypeptide is Ribonuclease 3 (Shewanella sediminis (strain HAW-EB3)).